The following is a 92-amino-acid chain: FMRFamide-like neuropeptides 16 (92 aa).

The first 24 residues, 1-24 (MNFSGFEFSSIVAFFLLILQLSTA), serve as a signal peptide directing secretion. A propeptide spanning residues 25–55 (AVLPADYAYGVADEMSALPDSGSLFAEQRPS) is cleaved from the precursor. Residues F64, F74, and F84 each carry the phenylalanine amide modification. Positions 87 to 92 (SAPFEQ) are excised as a propeptide.

This sequence belongs to the FARP (FMRFamide related peptide) family. In terms of tissue distribution, each flp gene is expressed in a distinct set of neurons.

It localises to the secreted. Functionally, FMRFamides and FMRFamide-like peptides are neuropeptides. AQTFVRF-amide inhibits the activity of dissected pharyngeal myogenic muscle system. This is FMRFamide-like neuropeptides 16 from Caenorhabditis elegans.